A 157-amino-acid polypeptide reads, in one-letter code: Small ribosomal subunit protein uS7 (157 aa).

Belongs to the universal ribosomal protein uS7 family. Part of the 30S ribosomal subunit. Contacts proteins S9 and S11.

Its function is as follows. One of the primary rRNA binding proteins, it binds directly to 16S rRNA where it nucleates assembly of the head domain of the 30S subunit. Is located at the subunit interface close to the decoding center, probably blocks exit of the E-site tRNA. The polypeptide is Small ribosomal subunit protein uS7 (Pseudomonas fluorescens (strain Pf0-1)).